A 217-amino-acid polypeptide reads, in one-letter code: ATP phosphoribosyltransferase (217 aa).

It belongs to the ATP phosphoribosyltransferase family. Short subfamily. In terms of assembly, heteromultimer composed of HisG and HisZ subunits.

Its subcellular location is the cytoplasm. The catalysed reaction is 1-(5-phospho-beta-D-ribosyl)-ATP + diphosphate = 5-phospho-alpha-D-ribose 1-diphosphate + ATP. It participates in amino-acid biosynthesis; L-histidine biosynthesis; L-histidine from 5-phospho-alpha-D-ribose 1-diphosphate: step 1/9. Catalyzes the condensation of ATP and 5-phosphoribose 1-diphosphate to form N'-(5'-phosphoribosyl)-ATP (PR-ATP). Has a crucial role in the pathway because the rate of histidine biosynthesis seems to be controlled primarily by regulation of HisG enzymatic activity. In Burkholderia orbicola (strain MC0-3), this protein is ATP phosphoribosyltransferase.